A 205-amino-acid polypeptide reads, in one-letter code: Disintegrin-like leberagin-C (205 aa).

In terms of domain architecture, Disintegrin spans 4–90 (PPVCGNELLE…DCPIDRFHRN (87 aa)). 9 cysteine pairs are disulfide-bonded: C7–C26, C18–C36, C62–C82, C69–C94, C101–C106, C113–C128, C151–C158, C163–C171, and C193–C198. The short motif at 68–70 (ECD) is the D/ECD-tripeptide element. N120 carries N-linked (GlcNAc...) asparagine glycosylation.

The protein belongs to the venom metalloproteinase (M12B) family. P-III subfamily. P-IIIb sub-subfamily. In terms of assembly, monomer. As to expression, expressed by the venom gland.

It localises to the secreted. Its function is as follows. Inhibits platelet aggregation induced by thrombin and arachidonic acid with IC(50) of 40 and 50 nM respectively (in rabbit platetelet-rich plasma). It also inhibits the adhesion of melanoma tumor cells on fibrinogen and fibronectin, by interfering with the function of alpha-V/beta-3 (ITGAV/ITGB3) and, to a lesser extent, with alpha-V/beta-6 (ITGAV/ITGB6) and alpha-5/beta-1 (ITGA5/ITGB1) integrins. This Macrovipera lebetina transmediterranea (Blunt-nosed viper) protein is Disintegrin-like leberagin-C.